The following is a 461-amino-acid chain: Coronin-1A (461 aa).

Ser2 bears the N-acetylserine mark. Ser2 is modified (phosphoserine; by PKC). WD repeat units follow at residues 13-63, 73-110, 123-160, 164-204, 207-251, 258-296, and 302-349; these read HVFG…LVLP, NVPMVCGHTAPVLDIAWCPHNDNVIASGSEDCSVMVWE, PVVTLEGHTKRVGIVAWHPTAQNVLLSAGCDNVILVWD, GVAV…RIIE, KGTI…ALWD, PLSLQELDTSSGVLLPFFDPDTNIVYLCGKGDSSIRYFE, and PFLH…EPIA. Residues 404 to 418 show a composition bias toward basic and acidic residues; that stretch reads LRVNRGLDTGRKRTT. Positions 404-429 are disordered; that stretch reads LRVNRGLDTGRKRTTPEASGAPSSDA. At Thr412 the chain carries Phosphothreonine; by PKC. A Phosphothreonine modification is found at Thr418. Phosphoserine is present on Ser422. Positions 424 to 460 form a coiled coil; that stretch reads APSSDAISRLEEEMRKLQATVQELQKRLDRLEETVQA. At Lys449 the chain carries N6-acetyllysine.

Belongs to the WD repeat coronin family. In terms of assembly, binds actin. Post-translationally, phosphorylation at Thr-412 by PKC strongly down-regulates the association with actin. Polyubiquitinated by RNF128 with 'Lys-48'-linked chains, leading to proteasomal degradation. As to expression, expressed in brain, thymus, spleen, bone marrow and lymph node. Low in lung and gut.

The protein resides in the cytoplasm. The protein localises to the cytoskeleton. It localises to the cell cortex. Its subcellular location is the cytoplasmic vesicle. It is found in the phagosome membrane. In terms of biological role, may be a crucial component of the cytoskeleton of highly motile cells, functioning both in the invagination of large pieces of plasma membrane, as well as in forming protrusions of the plasma membrane involved in cell locomotion. In mycobacteria-infected macrophages, its retention on the phagosomal membrane prevents fusion between phagosomes and lysosomes. This is Coronin-1A (CORO1A) from Bos taurus (Bovine).